A 126-amino-acid polypeptide reads, in one-letter code: S-adenosylmethionine decarboxylase proenzyme (126 aa).

Ser63 serves as the catalytic Schiff-base intermediate with substrate; via pyruvic acid. The residue at position 63 (Ser63) is a Pyruvic acid (Ser); by autocatalysis. His68 functions as the Proton acceptor; for processing activity in the catalytic mechanism. The Proton donor; for catalytic activity role is filled by Cys83.

It belongs to the prokaryotic AdoMetDC family. Type 1 subfamily. In terms of assembly, heterotetramer of two alpha and two beta chains arranged as a dimer of alpha/beta heterodimers. Requires pyruvate as cofactor. Is synthesized initially as an inactive proenzyme. Formation of the active enzyme involves a self-maturation process in which the active site pyruvoyl group is generated from an internal serine residue via an autocatalytic post-translational modification. Two non-identical subunits are generated from the proenzyme in this reaction, and the pyruvate is formed at the N-terminus of the alpha chain, which is derived from the carboxyl end of the proenzyme. The post-translation cleavage follows an unusual pathway, termed non-hydrolytic serinolysis, in which the side chain hydroxyl group of the serine supplies its oxygen atom to form the C-terminus of the beta chain, while the remainder of the serine residue undergoes an oxidative deamination to produce ammonia and the pyruvoyl group blocking the N-terminus of the alpha chain.

It carries out the reaction S-adenosyl-L-methionine + H(+) = S-adenosyl 3-(methylsulfanyl)propylamine + CO2. The protein operates within amine and polyamine biosynthesis; S-adenosylmethioninamine biosynthesis; S-adenosylmethioninamine from S-adenosyl-L-methionine: step 1/1. In terms of biological role, catalyzes the decarboxylation of S-adenosylmethionine to S-adenosylmethioninamine (dcAdoMet), the propylamine donor required for the synthesis of the polyamines spermine and spermidine from the diamine putrescine. In Clostridium kluyveri (strain NBRC 12016), this protein is S-adenosylmethionine decarboxylase proenzyme.